The sequence spans 66 residues: MDWLAKYWWILVLVFLVGVLLNVIKDLKRIDHKKFLANKPELPPHRDFNDKWDDEDDWPKKDQSKK.

A helical membrane pass occupies residues 4-24 (LAKYWWILVLVFLVGVLLNVI). Residues 39–66 (KPELPPHRDFNDKWDDEDDWPKKDQSKK) form a disordered region. Residues 42 to 51 (LPPHRDFNDK) are compositionally biased toward basic and acidic residues.

The protein belongs to the UPF0370 family.

Its subcellular location is the cell membrane. The polypeptide is UPF0370 protein YpfN (Salmonella arizonae (strain ATCC BAA-731 / CDC346-86 / RSK2980)).